Here is a 316-residue protein sequence, read N- to C-terminus: D-alanine--D-alanine ligase (316 aa).

Residues 108–310 enclose the ATP-grasp domain; the sequence is ERYEELSVVK…FDELVDLIIK (203 aa). Position 138–193 (138–193) interacts with ATP; the sequence is EEKIGLPCVVKPRKEGSSIGTHICFSKEELLDALKNEFKNYDEMIVQEYIKGKEIT. Residues D265, E277, and N279 each contribute to the Mg(2+) site.

It belongs to the D-alanine--D-alanine ligase family. Mg(2+) is required as a cofactor. The cofactor is Mn(2+).

The protein resides in the cytoplasm. It catalyses the reaction 2 D-alanine + ATP = D-alanyl-D-alanine + ADP + phosphate + H(+). The protein operates within cell wall biogenesis; peptidoglycan biosynthesis. Its function is as follows. Cell wall formation. The sequence is that of D-alanine--D-alanine ligase from Fervidobacterium nodosum (strain ATCC 35602 / DSM 5306 / Rt17-B1).